The following is a 239-amino-acid chain: ATP-dependent dethiobiotin synthetase BioD (239 aa).

Position 15 to 20 (Glu-15 to Phe-20) interacts with ATP. Residue Thr-19 participates in Mg(2+) binding. Residue Lys-40 is part of the active site. ATP-binding positions include Asp-57, Glu-118–Gly-121, and Asn-178–His-179. Residues Asp-57 and Glu-118 each coordinate Mg(2+).

The protein belongs to the dethiobiotin synthetase family. Homodimer. Mg(2+) is required as a cofactor.

It is found in the cytoplasm. The catalysed reaction is (7R,8S)-7,8-diammoniononanoate + CO2 + ATP = (4R,5S)-dethiobiotin + ADP + phosphate + 3 H(+). The protein operates within cofactor biosynthesis; biotin biosynthesis; biotin from 7,8-diaminononanoate: step 1/2. In terms of biological role, catalyzes a mechanistically unusual reaction, the ATP-dependent insertion of CO2 between the N7 and N8 nitrogen atoms of 7,8-diaminopelargonic acid (DAPA, also called 7,8-diammoniononanoate) to form a ureido ring. The protein is ATP-dependent dethiobiotin synthetase BioD of Burkholderia multivorans (strain ATCC 17616 / 249).